Reading from the N-terminus, the 312-residue chain is Aspartate carbamoyltransferase catalytic subunit (312 aa).

Residues Arg58 and Thr59 each coordinate carbamoyl phosphate. Lys86 serves as a coordination point for L-aspartate. Carbamoyl phosphate is bound by residues Arg108, His136, and Gln139. 2 residues coordinate L-aspartate: Arg169 and Arg223. The carbamoyl phosphate site is built by Gly264 and Pro265.

It belongs to the aspartate/ornithine carbamoyltransferase superfamily. ATCase family. As to quaternary structure, heterododecamer (2C3:3R2) of six catalytic PyrB chains organized as two trimers (C3), and six regulatory PyrI chains organized as three dimers (R2).

The catalysed reaction is carbamoyl phosphate + L-aspartate = N-carbamoyl-L-aspartate + phosphate + H(+). Its pathway is pyrimidine metabolism; UMP biosynthesis via de novo pathway; (S)-dihydroorotate from bicarbonate: step 2/3. In terms of biological role, catalyzes the condensation of carbamoyl phosphate and aspartate to form carbamoyl aspartate and inorganic phosphate, the committed step in the de novo pyrimidine nucleotide biosynthesis pathway. The chain is Aspartate carbamoyltransferase catalytic subunit from Heliobacterium modesticaldum (strain ATCC 51547 / Ice1).